Reading from the N-terminus, the 556-residue chain is Formate--tetrahydrofolate ligase (556 aa).

Residue 65–72 (TPAGEGKS) coordinates ATP.

It belongs to the formate--tetrahydrofolate ligase family.

The enzyme catalyses (6S)-5,6,7,8-tetrahydrofolate + formate + ATP = (6R)-10-formyltetrahydrofolate + ADP + phosphate. Its pathway is one-carbon metabolism; tetrahydrofolate interconversion. The protein is Formate--tetrahydrofolate ligase of Clostridium perfringens (strain ATCC 13124 / DSM 756 / JCM 1290 / NCIMB 6125 / NCTC 8237 / Type A).